A 363-amino-acid chain; its full sequence is 5-formaminoimidazole-4-carboxamide-1-(beta)-D-ribofuranosyl 5'-monophosphate synthetase (363 aa).

The 5-amino-1-(5-phospho-beta-D-ribosyl)imidazole-4-carboxamide site is built by His-29 and Ser-96. The 237-residue stretch at 118-354 (RDILRWEAER…ISREIKNAIE (237 aa)) folds into the ATP-grasp domain. ATP-binding positions include 148–210 (PEDI…TNFC) and Glu-232. Asn-260 contributes to the 5-amino-1-(5-phospho-beta-D-ribosyl)imidazole-4-carboxamide binding site. Residues Gln-299 and Glu-312 each contribute to the Mg(2+) site.

The protein belongs to the phosphohexose mutase family. The cofactor is Mg(2+). Requires Mn(2+) as cofactor.

It carries out the reaction 5-amino-1-(5-phospho-beta-D-ribosyl)imidazole-4-carboxamide + formate + ATP = 5-formamido-1-(5-phospho-D-ribosyl)imidazole-4-carboxamide + ADP + phosphate. Its pathway is purine metabolism; IMP biosynthesis via de novo pathway; 5-formamido-1-(5-phospho-D-ribosyl)imidazole-4-carboxamide from 5-amino-1-(5-phospho-D-ribosyl)imidazole-4-carboxamide (formate route): step 1/1. Its function is as follows. Catalyzes the ATP- and formate-dependent formylation of 5-aminoimidazole-4-carboxamide-1-beta-d-ribofuranosyl 5'-monophosphate (AICAR) to 5-formaminoimidazole-4-carboxamide-1-beta-d-ribofuranosyl 5'-monophosphate (FAICAR) in the absence of folates. The chain is 5-formaminoimidazole-4-carboxamide-1-(beta)-D-ribofuranosyl 5'-monophosphate synthetase from Methanosphaera stadtmanae (strain ATCC 43021 / DSM 3091 / JCM 11832 / MCB-3).